A 680-amino-acid chain; its full sequence is uncharacterized protein (680 aa).

Belongs to the HyuA family.

This is an uncharacterized protein from Methanocaldococcus jannaschii (strain ATCC 43067 / DSM 2661 / JAL-1 / JCM 10045 / NBRC 100440) (Methanococcus jannaschii).